Consider the following 590-residue polypeptide: Aspartate--tRNA(Asp/Asn) ligase (590 aa).

E175 contributes to the L-aspartate binding site. The interval 199 to 202 is aspartate; it reads QQYK. L-aspartate-binding residues include R221 and H450. Position 221–223 (221–223) interacts with ATP; the sequence is RDE. An ATP-binding site is contributed by E484. Position 491 (R491) interacts with L-aspartate. An ATP-binding site is contributed by 536 to 539; it reads GVDR.

The protein belongs to the class-II aminoacyl-tRNA synthetase family. Type 1 subfamily. Homodimer.

It is found in the cytoplasm. The catalysed reaction is tRNA(Asx) + L-aspartate + ATP = L-aspartyl-tRNA(Asx) + AMP + diphosphate. Functionally, aspartyl-tRNA synthetase with relaxed tRNA specificity since it is able to aspartylate not only its cognate tRNA(Asp) but also tRNA(Asn). Reaction proceeds in two steps: L-aspartate is first activated by ATP to form Asp-AMP and then transferred to the acceptor end of tRNA(Asp/Asn). The polypeptide is Aspartate--tRNA(Asp/Asn) ligase (Nitrobacter hamburgensis (strain DSM 10229 / NCIMB 13809 / X14)).